A 107-amino-acid chain; its full sequence is MTYLFLICAILAEVVATSLLKSTQGFTRLWPTVICLLGYAVSFALLAVSISRGMQTDVAYALWSAIGTALIVLIAVLFLGSPISVTKVVGVGLIIAGVVTLNLTGAH.

Transmembrane regions (helical) follow at residues 2-19 (TYLFLICAILAEVVATSL), 29-51 (LWPTVICLLGYAVSFALLAVSIS), 58-80 (VAYALWSAIGTALIVLIAVLFLG), and 84-106 (SVTKVVGVGLIIAGVVTLNLTGA).

The protein belongs to the drug/metabolite transporter (DMT) superfamily. Small multidrug resistance (SMR) (TC 2.A.7.1) family. Mmr subfamily.

The protein resides in the cell membrane. In terms of biological role, multidrug efflux pump. Confers resistance to tetraphenylphosphonium (TPP), erythromycin, ethidium bromide, acriflavine, safranin O and pyronin Y. The sequence is that of Multidrug resistance protein mmr (mmr) from Mycolicibacterium paratuberculosis (strain ATCC BAA-968 / K-10) (Mycobacterium paratuberculosis).